The following is a 432-amino-acid chain: MDRIAITGGAQLNGIIPVSGAKNSAIKLMAASLLTDQPLRLTNMPRLADTKFLGKLLTRLGAQVDEREGLDGSETVLHAAEITSGFAPYDLVRQMRASFNVLGPLIARTGQAKVSLPGGCTIGARPVDLHLQALEALGAKIDLHEGYVYAQAPRGLKGAEITFPFVSVGATEHAMLAAVLADGVTHIHNAACEPELLDLQICLNAMGAKVEGAGTPTITITGVAKLHGATHSVIPDRIEMGTYAVAAAMAGGEVQLTRARPELIDSLLVKLEEAGAGVVRTEDGVIIKRDGTRLNAVDVETQPYPGFATDLQAQFMALMTTAKGESRIRETIFENRFMHAPELMRLGADISVSGGEAIVRGVDRLEGAEVMATDLRASVSLVIAGLVARGETTVSRIYHLDRGFERLEEKLGACGAQVRRIKGDAEGGPDHD.

22 to 23 (KN) serves as a coordination point for phosphoenolpyruvate. Arg-96 is a UDP-N-acetyl-alpha-D-glucosamine binding site. Cys-120 serves as the catalytic Proton donor. Position 120 is a 2-(S-cysteinyl)pyruvic acid O-phosphothioketal (Cys-120). Residues 125–129 (RPVDL), Asp-310, and Ile-332 each bind UDP-N-acetyl-alpha-D-glucosamine.

This sequence belongs to the EPSP synthase family. MurA subfamily.

The protein localises to the cytoplasm. It carries out the reaction phosphoenolpyruvate + UDP-N-acetyl-alpha-D-glucosamine = UDP-N-acetyl-3-O-(1-carboxyvinyl)-alpha-D-glucosamine + phosphate. The protein operates within cell wall biogenesis; peptidoglycan biosynthesis. Functionally, cell wall formation. Adds enolpyruvyl to UDP-N-acetylglucosamine. In Caulobacter sp. (strain K31), this protein is UDP-N-acetylglucosamine 1-carboxyvinyltransferase.